Reading from the N-terminus, the 705-residue chain is Solute carrier family 12 member 8 (705 aa).

Helical transmembrane passes span 38-58 (FGTWDGVFTSCMINIFGVVLF), 69-89 (GVLLGLLLVSFVVLVALITVL), 92-112 (IGVAEHGGISSGGVYSMISSV), 121-141 (VGLLYVFGQCVAGAMYITGFA), 159-179 (ISVAVLLALLGINLAGVKWII), 181-201 (LQLLLLLLLAVSTLDFVVGSF), 232-252 (FFTVFGVFFPAATGVMAGFNM), 268-288 (LAAVGVSWFLYIIFAFLLGAV), 306-326 (LVGFLFLLGLYISSLASCMGG), 368-388 (LVTMAFVLVGQVNVLAPVVTI), and 390-410 (FMLTYIMVDYSYFALSMAHCG). A disordered region spans residues 472–512 (ESRQLGSREGNNPKNQKRKGKKGAKQTLQDSFLLDPGSPLS). Residues 486–495 (NQKRKGKKGA) show a composition bias toward basic residues. 2 consecutive transmembrane segments (helical) span residues 587–607 (WVSLLGALASLLIMFVIQWLY) and 612–632 (MGVAALVYFYIGQASPGLYLG).

The protein belongs to the SLC12A transporter family.

Its subcellular location is the membrane. Cation/chloride cotransporter that may play a role in the control of keratinocyte proliferation. This chain is Solute carrier family 12 member 8 (Slc12a8), found in Mus musculus (Mouse).